A 1555-amino-acid polypeptide reads, in one-letter code: Regulating synaptic membrane exocytosis protein 2 (1555 aa).

Positions Met1–Glu35 are disordered. The segment covering Arg10–Glu25 has biased composition (pro residues). One can recognise a RabBD domain in the interval Met26 to Ser154. Residues Lys86–Glu142 form an FYVE-type zinc finger. Zn(2+) contacts are provided by Cys92, Cys95, Cys108, Cys111, Cys116, Cys119, Cys134, and Cys137. The segment covering Ser154–Asp163 has biased composition (polar residues). The disordered stretch occupies residues Ser154 to Asp530. Residues Leu170–Glu185 show a composition bias toward basic and acidic residues. A compositionally biased stretch (polar residues) spans Tyr259–Arg268. 4 stretches are compositionally biased toward basic and acidic residues: residues Glu287 to Arg298, Arg317 to Ser335, Glu351 to Asp370, and Glu379 to Ala403. Position 369 is a phosphoserine (Ser369). Residues Ala418 to Ser432 are compositionally biased toward polar residues. Residues Asp444 to Asp461 are compositionally biased toward basic and acidic residues. Residues Arg479–Ser490 show a composition bias toward polar residues. Basic residues predominate over residues Arg497–Lys506. The region spanning Asp590 to Arg676 is the PDZ domain. At Thr611 the chain carries Phosphothreonine. Positions Pro682–Ser716 are disordered. A phosphoserine mark is found at Ser713 and Ser716. The C2 1 domain occupies Phe743–Tyr866. Disordered regions lie at residues Pro877 to Tyr913, Ser935 to Ser1145, Tyr1180 to Ala1207, Leu1268 to Lys1288, and Lys1307 to Thr1332. Polar residues predominate over residues Ser935 to Gly953. Composition is skewed to basic and acidic residues over residues Arg996–His1014 and Gln1025–Asp1071. The segment covering Ala1092 to Gly1114 has biased composition (low complexity). Position 1106 is a phosphoserine (Ser1106). 2 stretches are compositionally biased toward basic and acidic residues: residues Thr1128 to Arg1141 and Tyr1180 to Ala1190. Residues Ser1200 and Ser1276 each carry the phosphoserine modification. Positions Ala1401–Phe1519 constitute a C2 2 domain. Ser1540 and Ser1543 each carry phosphoserine.

As to quaternary structure, heterodimer with PCLO. Part of a ternary complex involving PCLO and EPAC2. Interacts with RAB3C, RAB3D and RAB26. Binds RAB3A and RAB3B that have been activated by GTP-binding. Interacts with TSPOAP1 and RIMBP2. Interacts with PPFIA3 and PPFIA4. Interacts via its zinc finger with the first C2 domain of UNC13A. Forms a complex consisting of UNC13A, RIMS2 and RAB3A. In terms of tissue distribution, highly expressed in hippocampus, brain cortex, cerebellum and olfactory bulb. Detected at intermediate levels in midbrain, hindbrain and spinal cord, and at low levels in testis.

The protein localises to the cell membrane. It localises to the synapse. Its subcellular location is the presynaptic cell membrane. Functionally, rab effector involved in exocytosis. May act as scaffold protein. Plays a role in dendrite formation by melanocytes. This Rattus norvegicus (Rat) protein is Regulating synaptic membrane exocytosis protein 2 (Rims2).